We begin with the raw amino-acid sequence, 706 residues long: MILMITAPVCPPHLLLRHSSLLRHESSIGNFHRKKNPRFRTVSCSSLLPQPSVRPDKASELKTLWKKFYKVASPYWFSEDKDQARLRLAAVFALTLATTGISVGFNFLGRDFYNSLANKDQEQFTKQLFYYLCAFAGGIPFFVLRDYTKETLSLRWRSWMTKYYLQRYLKDQTFYKIQSQSIIDNPDQRLVDDLSSFTGTALSFSLTLVNATIDLISFSNILFTIYPPLFLVLLLYSFGGTAISVFLGKGLVNLNFLQEKKEADFRYSLVRVRENAESIAFYGGEQNEMQLLLQRFRSAFDNLTELLIASRNLEFFTDGYRYLIQILPVAVVAPMYFSGKIEFGVINQSVSAFNHILGDFSLVVYQFQAISSFSAVIDRLGEFDDLLDNNIFRDPSDTVDEIELTYQSEMNSSLLDTNGSIKSQPNQKRLEIEELTLQTPTNGTTLVHNLSADVYDKDHLLIMGPSGSGKTSLLRAMAGLWRSGKGKITFYLDPEVDFTQEKSDTQENSGKRGDVLFLPQRPYMVLGSLRQQLLYPTWSATVEETTPGGSNIDGSPPLLIREDGNEKPTTDDLMRTLEKVCLGHIADRFGGLDSIHEWSSVLSLGEQQRLAFARLLLSQPKLALLDESTSALDEANEAFLYQQIQSAGITYISIGHRRTLTKFHNKILQISTADPKSNERNWRIEDVDAQDSLYGRLNQKEVPSES.

A chloroplast-targeting transit peptide spans 1–44; sequence MILMITAPVCPPHLLLRHSSLLRHESSIGNFHRKKNPRFRTVSC. S45 is modified (N-acetylserine). The next 5 membrane-spanning stretches (helical) occupy residues 88–108, 124–144, 200–222, 237–257, and 326–346; these read LAAVFALTLATTGISVGFNFL, FTKQLFYYLCAFAGGIPFFVL, TALSFSLTLVNATIDLISFSNIL, SFGGTAISVFLGKGLVNLNFL, and ILPVAVVAPMYFSGKIEFGVI. The region spanning 88-372 is the ABC transmembrane type-1 domain; that stretch reads LAAVFALTLA…VVYQFQAISS (285 aa). The region spanning 430 to 697 is the ABC transporter domain; sequence LEIEELTLQT…DAQDSLYGRL (268 aa). 464 to 471 contributes to the ATP binding site; it reads GPSGSGKT. The interval 545–569 is disordered; that stretch reads TTPGGSNIDGSPPLLIREDGNEKPT. The segment covering 560–569 has biased composition (basic and acidic residues); that stretch reads IREDGNEKPT.

It belongs to the ABC transporter superfamily. ABCD family. Peroxisomal fatty acyl CoA transporter (TC 3.A.1.203) subfamily. Homodimer or heterodimer.

The protein localises to the membrane. It is found in the plastid. Its subcellular location is the chloroplast. The protein is ABC transporter D family member 2, chloroplastic (ABCC2) of Arabidopsis thaliana (Mouse-ear cress).